Here is a 109-residue protein sequence, read N- to C-terminus: Large ribosomal subunit protein uL24 (109 aa).

The tract at residues 85–109 (KYGTDPKTNKKVRLSRKTNNLVGGQ) is disordered.

The protein belongs to the universal ribosomal protein uL24 family. Part of the 50S ribosomal subunit.

Its function is as follows. One of two assembly initiator proteins, it binds directly to the 5'-end of the 23S rRNA, where it nucleates assembly of the 50S subunit. Functionally, one of the proteins that surrounds the polypeptide exit tunnel on the outside of the subunit. This chain is Large ribosomal subunit protein uL24, found in Mycoplasmoides gallisepticum (strain R(low / passage 15 / clone 2)) (Mycoplasma gallisepticum).